The primary structure comprises 159 residues: Phosphopantetheine adenylyltransferase (159 aa).

Residue S9 participates in substrate binding. ATP contacts are provided by residues 9–10 and H17; that span reads SF. Substrate-binding residues include K41, L73, and K87. ATP contacts are provided by residues 88–90, E98, and 122–128; these read GLR and YSFLSSS.

The protein belongs to the bacterial CoaD family. As to quaternary structure, homohexamer. Requires Mg(2+) as cofactor.

The protein resides in the cytoplasm. It carries out the reaction (R)-4'-phosphopantetheine + ATP + H(+) = 3'-dephospho-CoA + diphosphate. It functions in the pathway cofactor biosynthesis; coenzyme A biosynthesis; CoA from (R)-pantothenate: step 4/5. Reversibly transfers an adenylyl group from ATP to 4'-phosphopantetheine, yielding dephospho-CoA (dPCoA) and pyrophosphate. This is Phosphopantetheine adenylyltransferase from Streptomyces griseus subsp. griseus (strain JCM 4626 / CBS 651.72 / NBRC 13350 / KCC S-0626 / ISP 5235).